A 483-amino-acid polypeptide reads, in one-letter code: Xylulose kinase (483 aa).

77 to 78 is a substrate binding site; that stretch reads MH. Asp-233 acts as the Proton acceptor in catalysis.

The protein belongs to the FGGY kinase family.

It catalyses the reaction D-xylulose + ATP = D-xylulose 5-phosphate + ADP + H(+). Functionally, catalyzes the phosphorylation of D-xylulose to D-xylulose 5-phosphate. This is Xylulose kinase from Klebsiella pneumoniae.